The sequence spans 163 residues: Ankyrin repeat domain-containing protein 37 (163 aa).

ANK repeat units follow at residues 29-58 (LGQS…DVNQ), 62-91 (FGEA…RIDM), and 95-124 (DGHT…TQDT). Residues 129–149 (QSSLHNLKETAAGVKRGQCCQ) carry the Nuclear localization signal motif.

Its subcellular location is the nucleus. It is found in the cytoplasm. In Xenopus tropicalis (Western clawed frog), this protein is Ankyrin repeat domain-containing protein 37 (ankrd37).